A 376-amino-acid chain; its full sequence is Spermidine/putrescine import ATP-binding protein PotA (376 aa).

Positions 6 to 236 constitute an ABC transporter domain; it reads INIVNVNKSF…PADTFVADFL (231 aa). Position 38 to 45 (38 to 45) interacts with ATP; sequence GPSGCGKT.

Belongs to the ABC transporter superfamily. Spermidine/putrescine importer (TC 3.A.1.11.1) family. In terms of assembly, the complex is composed of two ATP-binding proteins (PotA), two transmembrane proteins (PotB and PotC) and a solute-binding protein (PotD).

It localises to the cell inner membrane. It carries out the reaction ATP + H2O + polyamine-[polyamine-binding protein]Side 1 = ADP + phosphate + polyamineSide 2 + [polyamine-binding protein]Side 1.. Its function is as follows. Part of the ABC transporter complex PotABCD involved in spermidine/putrescine import. Responsible for energy coupling to the transport system. The protein is Spermidine/putrescine import ATP-binding protein PotA of Fusobacterium nucleatum subsp. nucleatum (strain ATCC 25586 / DSM 15643 / BCRC 10681 / CIP 101130 / JCM 8532 / KCTC 2640 / LMG 13131 / VPI 4355).